Reading from the N-terminus, the 294-residue chain is tRNA dimethylallyltransferase (294 aa).

10 to 17 (GPTAVGKT) contacts ATP. 12–17 (TAVGKT) contributes to the substrate binding site. Residues 35–38 (DSQQ) are interaction with substrate tRNA.

Belongs to the IPP transferase family. In terms of assembly, monomer. Mg(2+) is required as a cofactor.

It catalyses the reaction adenosine(37) in tRNA + dimethylallyl diphosphate = N(6)-dimethylallyladenosine(37) in tRNA + diphosphate. Functionally, catalyzes the transfer of a dimethylallyl group onto the adenine at position 37 in tRNAs that read codons beginning with uridine, leading to the formation of N6-(dimethylallyl)adenosine (i(6)A). This chain is tRNA dimethylallyltransferase, found in Streptococcus pneumoniae (strain Hungary19A-6).